A 300-amino-acid polypeptide reads, in one-letter code: Ribosomal protein L11 methyltransferase (300 aa).

S-adenosyl-L-methionine contacts are provided by threonine 148, glycine 171, aspartate 193, and asparagine 235.

It belongs to the methyltransferase superfamily. PrmA family.

The protein localises to the cytoplasm. The enzyme catalyses L-lysyl-[protein] + 3 S-adenosyl-L-methionine = N(6),N(6),N(6)-trimethyl-L-lysyl-[protein] + 3 S-adenosyl-L-homocysteine + 3 H(+). Methylates ribosomal protein L11. The polypeptide is Ribosomal protein L11 methyltransferase (Desulfotalea psychrophila (strain LSv54 / DSM 12343)).